Reading from the N-terminus, the 409-residue chain is Tryptophan synthase beta chain (409 aa).

N6-(pyridoxal phosphate)lysine is present on Lys95.

The protein belongs to the TrpB family. In terms of assembly, tetramer of two alpha and two beta chains. Requires pyridoxal 5'-phosphate as cofactor.

The enzyme catalyses (1S,2R)-1-C-(indol-3-yl)glycerol 3-phosphate + L-serine = D-glyceraldehyde 3-phosphate + L-tryptophan + H2O. The protein operates within amino-acid biosynthesis; L-tryptophan biosynthesis; L-tryptophan from chorismate: step 5/5. In terms of biological role, the beta subunit is responsible for the synthesis of L-tryptophan from indole and L-serine. The chain is Tryptophan synthase beta chain from Pseudomonas syringae pv. syringae (strain B728a).